A 1352-amino-acid polypeptide reads, in one-letter code: Alpha-protein kinase 1 (1352 aa).

The Arf-GAP domain maps to 7-127; sequence DPNYGLLRSL…RWTSSLSTSD (121 aa). The segment at 25 to 48 adopts a C4-type zinc-finger fold; that stretch reads CAECNSANVPYVCIKLGVFICPTC. Disordered stretches follow at residues 123 to 164, 219 to 380, 424 to 445, 457 to 484, 503 to 560, and 619 to 658; these read LSTS…NNNN, TQSQ…PQHH, QQQQQSPISNPFTSNNNSNSEP, HNHHHHQQQQHHKQQQQQQQQQQNGNNS, FVEE…GGVS, and IINNQNNQNNNNNNNTNNVMISPSPSPNPFLPTPTSTNQN. Residues 237-246 show a composition bias toward polar residues; sequence GFSPFNSPRS. 2 stretches are compositionally biased toward low complexity: residues 268–287 and 298–318; these read NNSNNNNNNNNNNNNGNNGN and NNNNNNNNNTTTTTTTTNNNN. Polar residues-rich tracts occupy residues 329–352 and 359–379; these read KTFSESGEYQNTNGNQQLSGSGNS and HPTQSKSPSPSGTPHSLSPQH. Residues 393 to 429 adopt a coiled-coil conformation; that stretch reads TTQQQLQQQQLQLQQQLQQQLQQQQQQQQQQQQQQQS. Basic residues-rich tracts occupy residues 458–470 and 510–523; these read NHHHHQQQQHHKQ and HQHPHHLQHHRHHS. The segment covering 619–636 has biased composition (low complexity); sequence IINNQNNQNNNNNNNTNN. The stretch at 689–781 forms a coiled coil; the sequence is YIQQQQQQQQ…QQQQQQHINL (93 aa). Disordered regions lie at residues 786–863 and 901–979; these read PLQS…TDED and TSPI…PDAR. The segment covering 799–812 has biased composition (polar residues); that stretch reads PQHSSSQYMNQQGY. Positions 821 to 859 are enriched in low complexity; that stretch reads QPQSPQQIQPQPLQQQIFQQVQQQQPQIPQQSPQPLQSS. The span at 906 to 915 shows a compositional bias: pro residues; that stretch reads QQPPQPPQPV. The segment covering 931 to 965 has biased composition (low complexity); that stretch reads QQQNGPTVPQQQQQQQQQQQQQQQQQQQQQQQQQP. The region spanning 990–1194 is the Alpha-type protein kinase domain; sequence RFDAKLGKWV…ICHYLGLSSV (205 aa). ATP is bound at residue 1164–1169; sequence GKGNLG. Disordered regions lie at residues 1198-1234 and 1279-1352; these read PANDESGTMPRPPSIGQSYVRPSAFPPNLQQSFSFNF and QQQQ…KLVS. Positions 1241 to 1320 form a coiled coil; that stretch reads HVLEQLNQQQ…QQQQQQQQNG (80 aa). Residues 1279-1319 are compositionally biased toward low complexity; the sequence is QQQQQQQQQQQQQQQQNQQQNQQQNQQQQQQQQQQQQQQQN. Over residues 1321–1332 the composition is skewed to pro residues; the sequence is HPPPQTPLPPTP. Residues 1334–1352 show a composition bias toward basic and acidic residues; the sequence is QKDKPKIEVFGDILRKLVS.

Belongs to the protein kinase superfamily. Alpha-type protein kinase family. ALPK subfamily.

The sequence is that of Alpha-protein kinase 1 (ak1) from Dictyostelium discoideum (Social amoeba).